Consider the following 612-residue polypeptide: Chaperone protein DnaK (612 aa).

Threonine 173 bears the Phosphothreonine; by autocatalysis mark. Positions 524 to 544 (DDKVSEEDKQKAESAKDELKQ) are enriched in basic and acidic residues. Disordered stretches follow at residues 524 to 560 (DDKVSEEDKQKAESAKDELKQALESGDMEQVKAKKDA) and 572 to 612 (LYEQ…DDKK). Residues 574-586 (EQVQQEAQQASGE) show a composition bias toward low complexity. Acidic residues predominate over residues 587–612 (QGEESGNQDDDVVDADYSEVDDDDKK).

Belongs to the heat shock protein 70 family.

In terms of biological role, acts as a chaperone. This Oceanobacillus iheyensis (strain DSM 14371 / CIP 107618 / JCM 11309 / KCTC 3954 / HTE831) protein is Chaperone protein DnaK.